Reading from the N-terminus, the 601-residue chain is Glutathione-regulated potassium-efflux system protein KefB (601 aa).

Helical transmembrane passes span 4–24 (SDLL…VPLA), 29–49 (IGAV…GLGF), 55–75 (EILH…GLEL), 87–107 (IFGV…GLLM), 115–135 (AAVI…LQLM), 152–172 (VLLF…LLAG), 177–197 (HFDW…LIGG), 207–227 (FIAD…LVLG), 230–250 (LFMD…GVLL), 262–282 (AIDP…GMSL), 284–304 (LGVL…LVAV), 324–344 (MQFA…FSTA), and 356–376 (SLLL…MKLV). The 120-residue stretch at 400-519 (KPQVIVVGFG…AGVTQFSRET (120 aa)) folds into the RCK N-terminal domain.

This sequence belongs to the monovalent cation:proton antiporter 2 (CPA2) transporter (TC 2.A.37) family. KefB subfamily. In terms of assembly, interacts with the regulatory subunit KefG.

The protein localises to the cell inner membrane. Functionally, pore-forming subunit of a potassium efflux system that confers protection against electrophiles. Catalyzes K(+)/H(+) antiport. This Citrobacter koseri (strain ATCC BAA-895 / CDC 4225-83 / SGSC4696) protein is Glutathione-regulated potassium-efflux system protein KefB.